The chain runs to 310 residues: HTH-type transcriptional regulator CbbR (310 aa).

In terms of domain architecture, HTH lysR-type spans 7-64 (ITLKQLRALVAVAGSASLTGGATRLGLTPPAIHSQIRNLEEAFGVPLLHRPPETGSFT). The H-T-H motif DNA-binding region spans 24–43 (LTGGATRLGLTPPAIHSQIR).

This sequence belongs to the LysR transcriptional regulatory family.

Transcriptional activator for the cbb operon for RuBisCO and other Calvin cycle genes. The chain is HTH-type transcriptional regulator CbbR (cbbR) from Cereibacter sphaeroides (Rhodobacter sphaeroides).